The following is a 117-amino-acid chain: Large ribosomal subunit protein bL19 (117 aa).

This sequence belongs to the bacterial ribosomal protein bL19 family.

Functionally, this protein is located at the 30S-50S ribosomal subunit interface and may play a role in the structure and function of the aminoacyl-tRNA binding site. The chain is Large ribosomal subunit protein bL19 from Aliivibrio salmonicida (strain LFI1238) (Vibrio salmonicida (strain LFI1238)).